A 238-amino-acid polypeptide reads, in one-letter code: Pyridoxine 5'-phosphate synthase (238 aa).

3-amino-2-oxopropyl phosphate is bound at residue Asn-7. Position 9–10 (Asp-9–His-10) interacts with 1-deoxy-D-xylulose 5-phosphate. Arg-18 contributes to the 3-amino-2-oxopropyl phosphate binding site. The active-site Proton acceptor is His-43. The 1-deoxy-D-xylulose 5-phosphate site is built by Arg-45 and His-50. Catalysis depends on Glu-70, which acts as the Proton acceptor. Residue Thr-100 coordinates 1-deoxy-D-xylulose 5-phosphate. His-190 acts as the Proton donor in catalysis. Residues Gly-191 and Gly-212 to His-213 each bind 3-amino-2-oxopropyl phosphate.

This sequence belongs to the PNP synthase family. As to quaternary structure, homooctamer; tetramer of dimers.

Its subcellular location is the cytoplasm. It carries out the reaction 3-amino-2-oxopropyl phosphate + 1-deoxy-D-xylulose 5-phosphate = pyridoxine 5'-phosphate + phosphate + 2 H2O + H(+). It participates in cofactor biosynthesis; pyridoxine 5'-phosphate biosynthesis; pyridoxine 5'-phosphate from D-erythrose 4-phosphate: step 5/5. Functionally, catalyzes the complicated ring closure reaction between the two acyclic compounds 1-deoxy-D-xylulose-5-phosphate (DXP) and 3-amino-2-oxopropyl phosphate (1-amino-acetone-3-phosphate or AAP) to form pyridoxine 5'-phosphate (PNP) and inorganic phosphate. The protein is Pyridoxine 5'-phosphate synthase of Prochlorococcus marinus (strain MIT 9215).